The following is a 1396-amino-acid chain: DNA-directed RNA polymerase subunit beta' (1396 aa).

Zn(2+)-binding residues include Cys-72, Cys-74, Cys-87, and Cys-90. 3 residues coordinate Mg(2+): Asp-463, Asp-465, and Asp-467. Residues Cys-814, Cys-889, Cys-896, and Cys-899 each coordinate Zn(2+).

It belongs to the RNA polymerase beta' chain family. The RNAP catalytic core consists of 2 alpha, 1 beta, 1 beta' and 1 omega subunit. When a sigma factor is associated with the core the holoenzyme is formed, which can initiate transcription. It depends on Mg(2+) as a cofactor. The cofactor is Zn(2+).

The enzyme catalyses RNA(n) + a ribonucleoside 5'-triphosphate = RNA(n+1) + diphosphate. In terms of biological role, DNA-dependent RNA polymerase catalyzes the transcription of DNA into RNA using the four ribonucleoside triphosphates as substrates. This Chlamydia trachomatis serovar L2 (strain ATCC VR-902B / DSM 19102 / 434/Bu) protein is DNA-directed RNA polymerase subunit beta'.